We begin with the raw amino-acid sequence, 156 residues long: Succinate dehydrogenase assembly factor 2-B, mitochondrial (156 aa).

A mitochondrion-targeting transit peptide spans 1–24 (MLRQFIVSTVGRRLQLPMMAQSRL).

The protein belongs to the SDHAF2 family. As to quaternary structure, interacts with the flavoprotein subunit within the SDH catalytic dimer.

It is found in the mitochondrion matrix. Functionally, plays an essential role in the assembly of succinate dehydrogenase (SDH), an enzyme complex (also referred to as respiratory complex II) that is a component of both the tricarboxylic acid (TCA) cycle and the mitochondrial electron transport chain, and which couples the oxidation of succinate to fumarate with the reduction of ubiquinone (coenzyme Q) to ubiquinol. Required for flavinylation (covalent attachment of FAD) of the flavoprotein subunit of the SDH catalytic dimer. The polypeptide is Succinate dehydrogenase assembly factor 2-B, mitochondrial (Drosophila melanogaster (Fruit fly)).